The following is a 432-amino-acid chain: Peptidase B (432 aa).

Lysine 196 and aspartate 201 together coordinate Mn(2+). Residue lysine 208 is part of the active site. Residues aspartate 219, aspartate 278, and glutamate 280 each contribute to the Mn(2+) site. Arginine 282 is an active-site residue.

The protein belongs to the peptidase M17 family. As to quaternary structure, homohexamer. It depends on Mn(2+) as a cofactor.

It localises to the cytoplasm. The catalysed reaction is Release of an N-terminal amino acid, Xaa, from a peptide or arylamide. Xaa is preferably Glu or Asp but may be other amino acids, including Leu, Met, His, Cys and Gln.. Its function is as follows. Probably plays an important role in intracellular peptide degradation. This is Peptidase B from Vibrio vulnificus (strain CMCP6).